The chain runs to 174 residues: 2-C-methyl-D-erythritol 2,4-cyclodiphosphate synthase (174 aa).

3 residues coordinate a divalent metal cation: aspartate 13, histidine 15, and histidine 61. Residue 13–15 coordinates 4-CDP-2-C-methyl-D-erythritol 2-phosphate; sequence DAH. 4-CDP-2-C-methyl-D-erythritol 2-phosphate-binding positions include 75–77, 149–152, phenylalanine 156, and arginine 159; these read DIG and TTTD.

The protein belongs to the IspF family. As to quaternary structure, homotrimer. Requires a divalent metal cation as cofactor.

It carries out the reaction 4-CDP-2-C-methyl-D-erythritol 2-phosphate = 2-C-methyl-D-erythritol 2,4-cyclic diphosphate + CMP. It participates in isoprenoid biosynthesis; isopentenyl diphosphate biosynthesis via DXP pathway; isopentenyl diphosphate from 1-deoxy-D-xylulose 5-phosphate: step 4/6. In terms of biological role, involved in the biosynthesis of isopentenyl diphosphate (IPP) and dimethylallyl diphosphate (DMAPP), two major building blocks of isoprenoid compounds. Catalyzes the conversion of 4-diphosphocytidyl-2-C-methyl-D-erythritol 2-phosphate (CDP-ME2P) to 2-C-methyl-D-erythritol 2,4-cyclodiphosphate (ME-CPP) with a corresponding release of cytidine 5-monophosphate (CMP). This chain is 2-C-methyl-D-erythritol 2,4-cyclodiphosphate synthase, found in Bifidobacterium longum subsp. infantis (strain ATCC 15697 / DSM 20088 / JCM 1222 / NCTC 11817 / S12).